A 461-amino-acid chain; its full sequence is Bifunctional protein GlmU (461 aa).

Residues 1 to 229 form a pyrophosphorylase region; the sequence is MNKYVVILAA…FSESLGVNDR (229 aa). UDP-N-acetyl-alpha-D-glucosamine is bound by residues 8 to 11, Lys-22, Gln-72, and 77 to 78; these read LAAG and GT. Asp-102 is a Mg(2+) binding site. Residues Gly-139, Glu-154, Asn-169, and Asn-227 each coordinate UDP-N-acetyl-alpha-D-glucosamine. Residue Asn-227 participates in Mg(2+) binding. The interval 230–250 is linker; that stretch reads IALAQATKIMQRRINEEHMKN. The segment at 251-461 is N-acetyltransferase; sequence GVSFIDPDTA…LPLSKDKEWE (211 aa). UDP-N-acetyl-alpha-D-glucosamine is bound by residues Arg-332 and Lys-350. The active-site Proton acceptor is the His-362. UDP-N-acetyl-alpha-D-glucosamine is bound by residues Tyr-365 and Asn-376. Residues 385–386, Ala-422, and Arg-439 each bind acetyl-CoA; that span reads NY.

This sequence in the N-terminal section; belongs to the N-acetylglucosamine-1-phosphate uridyltransferase family. In the C-terminal section; belongs to the transferase hexapeptide repeat family. As to quaternary structure, homotrimer. Mg(2+) serves as cofactor.

The protein localises to the cytoplasm. It carries out the reaction alpha-D-glucosamine 1-phosphate + acetyl-CoA = N-acetyl-alpha-D-glucosamine 1-phosphate + CoA + H(+). The enzyme catalyses N-acetyl-alpha-D-glucosamine 1-phosphate + UTP + H(+) = UDP-N-acetyl-alpha-D-glucosamine + diphosphate. It functions in the pathway nucleotide-sugar biosynthesis; UDP-N-acetyl-alpha-D-glucosamine biosynthesis; N-acetyl-alpha-D-glucosamine 1-phosphate from alpha-D-glucosamine 6-phosphate (route II): step 2/2. The protein operates within nucleotide-sugar biosynthesis; UDP-N-acetyl-alpha-D-glucosamine biosynthesis; UDP-N-acetyl-alpha-D-glucosamine from N-acetyl-alpha-D-glucosamine 1-phosphate: step 1/1. It participates in bacterial outer membrane biogenesis; LPS lipid A biosynthesis. In terms of biological role, catalyzes the last two sequential reactions in the de novo biosynthetic pathway for UDP-N-acetylglucosamine (UDP-GlcNAc). The C-terminal domain catalyzes the transfer of acetyl group from acetyl coenzyme A to glucosamine-1-phosphate (GlcN-1-P) to produce N-acetylglucosamine-1-phosphate (GlcNAc-1-P), which is converted into UDP-GlcNAc by the transfer of uridine 5-monophosphate (from uridine 5-triphosphate), a reaction catalyzed by the N-terminal domain. The sequence is that of Bifunctional protein GlmU from Lactobacillus gasseri (strain ATCC 33323 / DSM 20243 / BCRC 14619 / CIP 102991 / JCM 1131 / KCTC 3163 / NCIMB 11718 / NCTC 13722 / AM63).